The following is a 375-amino-acid chain: Putative type I specificity subunit S.MpnORF638P (375 aa).

Belongs to the type-I restriction system S methylase family. The methyltransferase is composed of M and S polypeptides.

Its function is as follows. The specificity (S) subunit of a type I methyltransferase (MTase); this subunit dictates DNA sequence specificity. The single R subunit has multiple frameshifts and is probably not expressed. The sequence is that of Putative type I specificity subunit S.MpnORF638P from Mycoplasma pneumoniae (strain ATCC 29342 / M129 / Subtype 1) (Mycoplasmoides pneumoniae).